The following is a 298-amino-acid chain: Ribosomal protein uL3 glutamine methyltransferase (298 aa).

It belongs to the protein N5-glutamine methyltransferase family. PrmB subfamily.

It catalyses the reaction L-glutaminyl-[ribosomal protein uL3] + S-adenosyl-L-methionine = N(5)-methyl-L-glutaminyl-[ribosomal protein uL3] + S-adenosyl-L-homocysteine + H(+). Its function is as follows. Methylates large ribosomal subunit protein uL3 on a specific glutamine residue. The polypeptide is Ribosomal protein uL3 glutamine methyltransferase (Bordetella pertussis (strain Tohama I / ATCC BAA-589 / NCTC 13251)).